The sequence spans 759 residues: uncharacterized protein (759 aa).

Disordered regions lie at residues Ser269 to Pro328 and Leu406 to Ala759. Basic and acidic residues predominate over residues Ala289–Gly299. The segment covering Leu406–Gly415 has biased composition (low complexity). The span at Ala417–Gly430 shows a compositional bias: basic and acidic residues. A compositionally biased stretch (low complexity) spans Arg431–Arg444. Basic and acidic residues-rich tracts occupy residues Pro469–His518 and Asp525–Thr545. The span at Trp585–Ser599 shows a compositional bias: pro residues. Over residues Ser659–Ser680 the composition is skewed to low complexity. Residues Pro681–Pro690 are compositionally biased toward pro residues. 2 stretches are compositionally biased toward low complexity: residues Ser691–Pro704 and Pro728–Pro746.

This is an uncharacterized protein from Human herpesvirus 6B (strain Z29) (HHV-6 variant B).